Here is an 867-residue protein sequence, read N- to C-terminus: cGMP-dependent 3',5'-cGMP phosphodiesterase A (867 aa).

The segment covering 121–146 (IINSSSSTTDTSKTSPIKKQTSSSSP) has biased composition (low complexity). Disordered stretches follow at residues 121–167 (IINS…SQQQ) and 180–241 (HHHH…STFP). Over residues 147 to 160 (PLSPQQQQPPPPLV) the composition is skewed to pro residues. Residues 191 to 220 (NDNNNNTTTNNNNIEILEQQQQQQQQQQQQ) are compositionally biased toward low complexity. A compositionally biased stretch (acidic residues) spans 221–232 (QDEDSTDVDEEF). The segment at 357–503 (STTGFVLWIN…GDTCYDPNRI (147 aa)) is phosphodiesterase activity. A divalent metal cation contacts are provided by histidine 399, histidine 401, and aspartate 403. A nucleoside 3',5'-cyclic phosphate contacts are provided by residues 607 to 721 (IFRS…WEMR) and 734 to 851 (VFSR…IFVD).

The protein belongs to the metallo-beta-lactamase superfamily. cNMP phosphodiesterase family. Mn(2+) serves as cofactor. Mg(2+) is required as a cofactor. It depends on Zn(2+) as a cofactor.

Its subcellular location is the cytoplasm. It is found in the cytosol. It catalyses the reaction 3',5'-cyclic GMP + H2O = GMP + H(+). Its function is as follows. Phosphodiesterase specific for cGMP, which is activated by cGMP but not by cAMP. Involved in the degradation of intracellular cGMP, contributes to the control of cGMP signals. This chain is cGMP-dependent 3',5'-cGMP phosphodiesterase A (pdeD), found in Dictyostelium discoideum (Social amoeba).